Reading from the N-terminus, the 390-residue chain is Oxygen-dependent coproporphyrinogen-III oxidase (390 aa).

Positions 131-140 are important for dimerization; the sequence is VLQDGDVFEK. Serine 181 serves as a coordination point for substrate. Histidine 195 functions as the Proton donor in the catalytic mechanism. Substrate is bound by residues 197–199 and 348–353; these read NYR and GARYES. Residues 329–365 are important for dimerization; it reads YVEFNLIYDRGTKFGLYTPGARYESILMSLPLHARWE.

The protein belongs to the aerobic coproporphyrinogen-III oxidase family. In terms of assembly, homodimer.

It carries out the reaction coproporphyrinogen III + O2 + 2 H(+) = protoporphyrinogen IX + 2 CO2 + 2 H2O. The protein operates within porphyrin-containing compound metabolism; protoporphyrin-IX biosynthesis; protoporphyrinogen-IX from coproporphyrinogen-III (O2 route): step 1/1. Functionally, involved in the heme biosynthesis. Catalyzes the aerobic oxidative decarboxylation of propionate groups of rings A and B of coproporphyrinogen-III to yield the vinyl groups in protoporphyrinogen-IX. This chain is Oxygen-dependent coproporphyrinogen-III oxidase (Coprox), found in Drosophila melanogaster (Fruit fly).